Here is a 662-residue protein sequence, read N- to C-terminus: Glycogen debranching enzyme (662 aa).

The active-site Nucleophile is the Asp338. Glu373 serves as the catalytic Proton donor.

This sequence belongs to the glycosyl hydrolase 13 family.

It catalyses the reaction Hydrolysis of (1-&gt;6)-alpha-D-glucosidic linkages to branches with degrees of polymerization of three or four glucose residues in limit dextrin.. It functions in the pathway glycan degradation; glycogen degradation. Removes maltotriose and maltotetraose chains that are attached by 1,6-alpha-linkage to the limit dextrin main chain, generating a debranched limit dextrin. The protein is Glycogen debranching enzyme of Yersinia pseudotuberculosis serotype IB (strain PB1/+).